The sequence spans 149 residues: Calmodulin-1 (149 aa).

At alanine 2 the chain carries N-acetylalanine. 4 consecutive EF-hand domains span residues 8–43 (EQIA…LGQN), 44–79 (PTEA…KMKD), 81–116 (DSEE…LGEK), and 117–149 (LTDE…MTAK). Aspartate 21 provides a ligand contact to Ca(2+). An N6-acetyllysine; alternate modification is found at lysine 22. Lysine 22 is covalently cross-linked (Glycyl lysine isopeptide (Lys-Gly) (interchain with G-Cter in SUMO2); alternate). Lysine 22 is covalently cross-linked (Glycyl lysine isopeptide (Lys-Gly) (interchain with G-Cter in ubiquitin); alternate). The Ca(2+) site is built by aspartate 23, aspartate 25, threonine 27, and glutamate 32. Position 45 is a phosphothreonine; by CaMK4 (threonine 45). Residues aspartate 57, aspartate 59, asparagine 61, threonine 63, and glutamate 68 each contribute to the Ca(2+) site. The tract at residues 77–149 (MKDTDSEEEI…EEFVQMMTAK (73 aa)) is necessary and sufficient for interaction with PCP4. Serine 82 carries the post-translational modification Phosphoserine. Aspartate 94 contacts Ca(2+). N6-acetyllysine is present on lysine 95. Ca(2+)-binding residues include aspartate 96, asparagine 98, and tyrosine 100. Tyrosine 100 is modified (phosphotyrosine). Position 102 is a phosphoserine (serine 102). Glutamate 105 provides a ligand contact to Ca(2+). Threonine 111 bears the Phosphothreonine mark. At lysine 116 the chain carries N6,N6,N6-trimethyllysine; alternate. Lysine 116 bears the N6-methyllysine; alternate mark. Ca(2+) contacts are provided by aspartate 130, aspartate 132, aspartate 134, and glutamine 136. Tyrosine 139 carries the phosphotyrosine modification. Glutamate 141 provides a ligand contact to Ca(2+).

The protein belongs to the calmodulin family. In terms of assembly, homotetramer. Interacts with MYO1C, MYO5A and RRAD. Interacts with MYO10. Interacts with CEP97, CCP110, TTN/titin and SRY. Interacts with USP6; the interaction is calcium dependent. Interacts with CDK5RAP2. Interacts with SCN5A. Interacts with RYR1. Interacts with FCHO1. Interacts with MIP in a 1:2 stoichiometry; the interaction with the cytoplasmic domains from two MIP subunits promotes MIP water channel closure. Interacts with ORAI1; this may play a role in the regulation of ORAI1-mediated calcium transport. Interacts with IQCF1. Interacts with SYT7. Interacts with CEACAM1 (via cytoplasmic domain); this interaction is in a calcium dependent manner and reduces homophilic cell adhesion through dissociation of dimer. Interacts with RYR2; regulates RYR2 calcium-release channel activity. Interacts with PCP4; regulates calmodulin calcium-binding. Interacts with the heterotetrameric KCNQ2 and KCNQ3 channel; the interaction is calcium-independent, constitutive and participates in the proper assembly of a functional heterotetrameric M channel. Interacts with alpha-synuclein/SNCA. Interacts with SLC9A1 in a calcium-dependent manner. In the absence of Ca(+2), interacts with GIMAP4 (via IQ domain). Interacts with SCN8A; the interaction modulates the inactivation rate of SCN8A. Interaction with KIF1A; the interaction is increased in presence of calcium and increases neuronal dense core vesicles motility. Interacts with KCNN3. Interacts with KCNQ1 (via C-terminus); forms a heterooctameric structure (with 4:4 KCNQ1:CALM stoichiometry) in a calcium-independent manner. Interacts with PIK3C3; the interaction modulates PIK3C3 kinase activity. Interacts with HINT1; interaction increases in the presence of calcium ions. Interacts with HINT3. Interacts with GARIN2; in mature sperm flagella. Interacts with IQUB. Interacts with SLC26A5 (via STAS domain); this interaction is calcium-dependent and the STAS domain interacts with only one lobe of CALM which is an elongated conformation. Ca(2+)-bound CALM1 binds CNGA1:CNGB1 channel (via CaM1 and CaM2 regions); this interaction modulates the affinity of the channel for cNMPs in response to intracellular Ca(2+) levels. Interacts with ITPR1; this interaction inhibits inositol 1,4,5 trisphosphate binding in both the presence and absence of calcium and 1,4,5 trisphosphate-induced calcium release in the presence of calcium. Component of the SIFI complex. Interacts with KCNN4; this interaction allows channel opening. Interacts with KCNN2; this interaction regulates the channel activity through calcium-binding. As to quaternary structure, (Microbial infection) Interacts with Rubella virus protease/methyltransferase p150. (Microbial infection) Interacts with Legionella pneumophila glutamylase SidJ. In terms of assembly, (Microbial infection) Interacts with C.violaceum CopC. C.violaceum CopC interacts specifically with the apo form of calmodulin. As to quaternary structure, (Microbial infection) Interacts with S.flexneri OspC1 and OspC3. S.flexneri OspC1 and OspC3 interact specifically with the apo form of calmodulin and prevents calcium-binding. Ubiquitination results in a strongly decreased activity. In terms of processing, phosphorylation results in a decreased activity.

It localises to the cytoplasm. Its subcellular location is the cytoskeleton. The protein localises to the spindle. The protein resides in the spindle pole. It is found in the microtubule organizing center. It localises to the centrosome. Its subcellular location is the cell projection. The protein localises to the cilium. The protein resides in the flagellum. Its activity is regulated as follows. (Microbial infection) Inactivated by S.flexneri OspC1 and OspC3 proteins, which specifically bind the apo-form of calmodulin, thereby preventing calcium-binding and activity. Its function is as follows. Calmodulin acts as part of a calcium signal transduction pathway by mediating the control of a large number of enzymes, ion channels, aquaporins and other proteins through calcium-binding. Calcium-binding is required for the activation of calmodulin. Among the enzymes to be stimulated by the calmodulin-calcium complex are a number of protein kinases, such as myosin light-chain kinases and calmodulin-dependent protein kinase type II (CaMK2), and phosphatases. Together with CCP110 and centrin, is involved in a genetic pathway that regulates the centrosome cycle and progression through cytokinesis. Is a regulator of voltage-dependent L-type calcium channels. Mediates calcium-dependent inactivation of CACNA1C. Positively regulates calcium-activated potassium channel activity of KCNN2. Forms a potassium channel complex with KCNQ1 and regulates electrophysiological activity of the channel via calcium-binding. Acts as a sensor to modulate the endoplasmic reticulum contacts with other organelles mediated by VMP1:ATP2A2. Functionally, (Microbial infection) Required for Legionella pneumophila SidJ glutamylase activity. (Microbial infection) Required for C.violaceum CopC and S.flexneri OspC3 arginine ADP-riboxanase activity. The sequence is that of Calmodulin-1 from Homo sapiens (Human).